Reading from the N-terminus, the 371-residue chain is Trans-enoyl reductase mycC (371 aa).

An NADP(+)-binding site is contributed by 51 to 54 (CDWK). 140 to 147 (CVVGTVGL) is a substrate binding site. NADP(+)-binding positions include 182 to 185 (STAS), 205 to 208 (SPAN), Tyr223, and 270 to 271 (FE). 291 to 295 (GIRLL) lines the substrate pocket. Position 361–362 (361–362 (VS)) interacts with NADP(+).

The protein belongs to the zinc-containing alcohol dehydrogenase family. Monomer.

The enzyme catalyses L-leucine + 8 malonyl-CoA + 4 S-adenosyl-L-methionine + ATP + 9 NADPH + 12 H(+) = (5S)-5-(2-methylpropyl)-3-[(2E,6R,8E,10E,12E)-6,8,10,12-tetramethyltetradeca-2,8,10,12-tetraenoyl]-2,5-dihydro-1H-pyrrol-2-one + AMP + 4 S-adenosyl-L-homocysteine + 8 CO2 + diphosphate + 9 NADP(+) + 8 CoA + 7 H2O. It functions in the pathway mycotoxin biosynthesis. In terms of biological role, trans-enoyl reductase; part of the gene cluster that mediates the biosynthesis of myceliothermophins, mycotoxins that contain a trans-fused decalin ring system connected to a conjugated 3-pyrrolin-2-one moiety and that have potential anti-tumor properties. The polyketide synthase module (PKS) of the PKS-NRPS mycA is responsible for the synthesis of the octaketide backbone. The downstream nonribosomal peptide synthetase (NRPS) module then amidates the carboxyl end of the octaketide with a leucine. A reductase-like domain (R) at the C-terminus catalyzes the reductive release of the polyketide-amino acid intermediate. Because mycA lacks a designated enoylreductase (ER) domain, the required activity is provided the enoyl reductase mycC. Following mycA-catalyzed construction and release of aminoacyl polyketide aldehyde, Knoevenagel condensation yields the expected ketone. This C18 keto acyclic precursor is the substrate of the Diels-Alderase mycB, that catalyzes the Diels-Alder cycloaddition to produce myceliothermophin E. A yet unknown oxygenase involved in the production of myceliothermophin A, via substitution with a hydroxyl group at the C21, has still to be identified. The chain is Trans-enoyl reductase mycC from Thermothelomyces thermophilus (strain ATCC 42464 / BCRC 31852 / DSM 1799) (Sporotrichum thermophile).